The primary structure comprises 835 residues: Leucine--tRNA ligase (835 aa).

The 'HIGH' region signature appears at 36 to 46; sequence PYPSGKIHVGH. A 'KMSKS' region motif is present at residues 602 to 606; it reads KMSKS. Lysine 605 lines the ATP pocket.

It belongs to the class-I aminoacyl-tRNA synthetase family.

The protein resides in the cytoplasm. The enzyme catalyses tRNA(Leu) + L-leucine + ATP = L-leucyl-tRNA(Leu) + AMP + diphosphate. The protein is Leucine--tRNA ligase of Rickettsia rickettsii (strain Iowa).